Reading from the N-terminus, the 329-residue chain is DNA-directed RNA polymerase subunit alpha (329 aa).

The tract at residues 1–234 is alpha N-terminal domain (alpha-NTD); sequence MSGSVTEFLK…EQLDAFVELR (234 aa). Positions 248–329 are alpha C-terminal domain (alpha-CTD); it reads FDPILLRPVD…WPPESIAEKD (82 aa).

It belongs to the RNA polymerase alpha chain family. In terms of assembly, homodimer. The RNAP catalytic core consists of 2 alpha, 1 beta, 1 beta' and 1 omega subunit. When a sigma factor is associated with the core the holoenzyme is formed, which can initiate transcription.

The catalysed reaction is RNA(n) + a ribonucleoside 5'-triphosphate = RNA(n+1) + diphosphate. DNA-dependent RNA polymerase catalyzes the transcription of DNA into RNA using the four ribonucleoside triphosphates as substrates. This is DNA-directed RNA polymerase subunit alpha from Pseudoalteromonas atlantica (strain T6c / ATCC BAA-1087).